A 618-amino-acid polypeptide reads, in one-letter code: Proline--tRNA ligase (618 aa).

The protein belongs to the class-II aminoacyl-tRNA synthetase family. ProS type 1 subfamily. As to quaternary structure, homodimer.

It localises to the cytoplasm. The catalysed reaction is tRNA(Pro) + L-proline + ATP = L-prolyl-tRNA(Pro) + AMP + diphosphate. In terms of biological role, catalyzes the attachment of proline to tRNA(Pro) in a two-step reaction: proline is first activated by ATP to form Pro-AMP and then transferred to the acceptor end of tRNA(Pro). As ProRS can inadvertently accommodate and process non-cognate amino acids such as alanine and cysteine, to avoid such errors it has two additional distinct editing activities against alanine. One activity is designated as 'pretransfer' editing and involves the tRNA(Pro)-independent hydrolysis of activated Ala-AMP. The other activity is designated 'posttransfer' editing and involves deacylation of mischarged Ala-tRNA(Pro). The misacylated Cys-tRNA(Pro) is not edited by ProRS. This is Proline--tRNA ligase from Streptococcus uberis (strain ATCC BAA-854 / 0140J).